The sequence spans 263 residues: MRFLILFLALSLGGIDAAPPVQSRIIGGFKCKKNSQPWHVAVLRSNKYICGGVLLDPNWVLTAAHCYGNDTSQHNVWLGKNKLFQREPSAQHRWVSKSFPHPDYNMSLLNDHIPHPEDKSNDLMLLRLSKPADITDAVKPIDLPTEEPKLGSTCLASGWGSITPTKYQIPNDLQCVFIKLLPNENCAKAYVHKVTDVMLCVGETGGGKGTCKGDSGGPLICDGVLHGITSWGSIPCAKPNAPGVFTKLIKFTSWIKDTMAKNP.

A signal peptide spans Met1–Ala17. The propeptide at Ala18 to Arg24 is activation peptide. The Peptidase S1 domain maps to Ile25 to Ala260. Cystine bridges form between Cys31/Cys175, Cys50/Cys66, Cys154/Cys221, Cys186/Cys200, and Cys211/Cys236. His65 (charge relay system) is an active-site residue. Residues Asn69 and Asn105 are each glycosylated (N-linked (GlcNAc...) asparagine). Asp122 serves as the catalytic Charge relay system. Ser215 (charge relay system) is an active-site residue.

The protein belongs to the peptidase S1 family. Kallikrein subfamily. As to expression, expressed in testis and submaxillary gland. Not expressed in heart, brain, spleen, lung, liver, muscle, kidney and ovary. In the testis, expression localized specifically to Leydig cells in the interstitial tissues.

Its activity is regulated as follows. Strongly inhibited by protease inhibitors diisopropyl fluorophosphate, phenylmethanesulfonyl fluoride and SBTI. Functionally, serine protease with chymotrypsin-like cleavage specificity. Shows activity towards casein, gelatin, IGFBP3 and fibronectin but not towards laminin or collagens I and IV. Does not hydrolyze kininogin to release Lys-bradykinin. The protein is Kallikrein 1-related peptidase b27 (Klk1b27) of Mus musculus (Mouse).